Consider the following 221-residue polypeptide: MSINNEKAIVVFSGGQDSTTCLFWTKKRFKEVIAVSFDYNQKHKLELECAKEICSKYNIEHHILDLGLLNQLAPNSLTRTDIKVDKNAPEDGVPNSFVDGRNMLFLTFVAVFAKQRGISHIITGVSQSDFSGYPDCRDVFIKSLNVTLNLAMDYEFVLHTPLMWIDKAETWKMAYDFGVLDIIKNETLTCYNGIKGNGCGECPSCKLRKKGYLKFKELYMK.

12 to 22 is an ATP binding site; sequence FSGGQDSTTCL. Positions 190, 199, 202, and 205 each coordinate Zn(2+).

The protein belongs to the QueC family. Homodimer. It depends on Zn(2+) as a cofactor.

The catalysed reaction is 7-carboxy-7-deazaguanine + NH4(+) + ATP = 7-cyano-7-deazaguanine + ADP + phosphate + H2O + H(+). It functions in the pathway purine metabolism; 7-cyano-7-deazaguanine biosynthesis. In terms of biological role, catalyzes the ATP-dependent conversion of 7-carboxy-7-deazaguanine (CDG) to 7-cyano-7-deazaguanine (preQ(0)). This chain is 7-cyano-7-deazaguanine synthase, found in Clostridium novyi (strain NT).